A 510-amino-acid chain; its full sequence is Membrane-bound transcription factor site-2 protease (510 aa).

Residues 1–3 are Cytoplasmic-facing; the sequence is MIP. Residues 4–24 form a helical membrane-spanning segment; the sequence is VSLVVVVVGGWTAVYLADLVL. Over 25–74 the chain is Lumenal; it reads KSSVYFKHSYEDWLEKNGLSISPFHIRWQTSVFNRAFYSWGRRKARMLYQ. 2 helical membrane passes run 75–95 and 96–107; these read WFNFGMVFGVIAMFSSFFLLG and KTLMQTLAQMMA. The Lumenal portion of the chain corresponds to 108–135; the sequence is DSPSSSSSSSSSSSSSSSSSIHNEQVLQ. Residues 136–160 traverse the membrane as a helical segment; that stretch reads VVVPGINLPVNQLTYFFAAVLISGV. Zn(2+) is bound at residue His-162. Residue Glu-163 is part of the active site. 3 consecutive transmembrane segments (helical) span residues 165-177, 178-200, and 220-242; these read GHGIAAIREQVRF, NGFGIFLFIIYPGAFVDLFTTHL, and FVLALLGILALVLLPVILLPFYY. His-166 contacts Zn(2+). The Lumenal segment spans residues 243 to 437; that stretch reads TGVGVLITEV…LPVIVETFVK (195 aa). An N-linked (GlcNAc...) asparagine glycan is attached at Asn-328. The next 2 helical transmembrane spans lie at 438–455 and 456–467; these read YLISLSGALAIVNAVPCF and ALDGQWILNSFL. Residues 468–483 lie on the Lumenal side of the membrane; it reads DATLTSVIGDNDVKDL. Residues 484–504 form a helical membrane-spanning segment; it reads IGFFILLGGSVLLAANVTLGL. Residues 505–510 lie on the Cytoplasmic side of the membrane; that stretch reads WMVTAR.

Belongs to the peptidase M50A family. Zn(2+) is required as a cofactor.

The protein resides in the membrane. It is found in the cytoplasm. Its subcellular location is the golgi apparatus membrane. The enzyme catalyses Cleaves several transcription factors that are type-2 transmembrane proteins within membrane-spanning domains. Known substrates include sterol regulatory element-binding protein (SREBP) -1, SREBP-2 and forms of the transcriptional activator ATF6. SREBP-2 is cleaved at the site 477-DRSRILL-|-CVLTFLCLSFNPLTSLLQWGGA-505. The residues Asn-Pro, 11 residues distal to the site of cleavage in the membrane-spanning domain, are important for cleavage by S2P endopeptidase. Replacement of either of these residues does not prevent cleavage, but there is no cleavage if both of these residues are replaced.. Zinc metalloprotease that mediates intramembrane proteolysis of proteins such as ATF6, ATF6B, SREBF1/SREBP1 and SREBF2/SREBP2. Catalyzes the second step in the proteolytic activation of the sterol regulatory element-binding proteins (SREBPs) SREBF1/SREBP1 and SREBF2/SREBP2: cleaves SREBPs within the first transmembrane segment, thereby releasing the N-terminal segment with a portion of the transmembrane segment attached. Mature N-terminal SREBP fragments shuttle to the nucleus and activate gene transcription. Also mediates the second step in the proteolytic activation of the cyclic AMP-dependent transcription factor ATF-6 (ATF6 and ATF6B). Involved in intramembrane proteolysis during bone formation. In astrocytes and osteoblasts, upon DNA damage and ER stress, mediates the second step of the regulated intramembrane proteolytic activation of the transcription factor CREB3L1, leading to the inhibition of cell-cycle progression. The protein is Membrane-bound transcription factor site-2 protease (MBTPS2) of Cricetulus griseus (Chinese hamster).